A 351-amino-acid polypeptide reads, in one-letter code: UDP-3-O-acylglucosamine N-acyltransferase (351 aa).

Histidine 240 serves as the catalytic Proton acceptor.

The protein belongs to the transferase hexapeptide repeat family. LpxD subfamily. Homotrimer.

The catalysed reaction is a UDP-3-O-[(3R)-3-hydroxyacyl]-alpha-D-glucosamine + a (3R)-hydroxyacyl-[ACP] = a UDP-2-N,3-O-bis[(3R)-3-hydroxyacyl]-alpha-D-glucosamine + holo-[ACP] + H(+). The protein operates within bacterial outer membrane biogenesis; LPS lipid A biosynthesis. Functionally, catalyzes the N-acylation of UDP-3-O-acylglucosamine using 3-hydroxyacyl-ACP as the acyl donor. Is involved in the biosynthesis of lipid A, a phosphorylated glycolipid that anchors the lipopolysaccharide to the outer membrane of the cell. This chain is UDP-3-O-acylglucosamine N-acyltransferase, found in Pseudomonas putida (strain ATCC 700007 / DSM 6899 / JCM 31910 / BCRC 17059 / LMG 24140 / F1).